Consider the following 95-residue polypeptide: Small ribosomal subunit protein bS6 (95 aa).

Belongs to the bacterial ribosomal protein bS6 family.

Its function is as follows. Binds together with bS18 to 16S ribosomal RNA. This is Small ribosomal subunit protein bS6 from Corynebacterium jeikeium (strain K411).